The chain runs to 538 residues: Putative cysteine ligase BshC (538 aa).

Residues 462–533 are a coiled coil; it reads LDHLEKRLLK…DPLESNFKIL (72 aa).

The protein belongs to the BshC family.

The chain is Putative cysteine ligase BshC from Christiangramia forsetii (strain DSM 17595 / CGMCC 1.15422 / KT0803) (Gramella forsetii).